Here is a 479-residue protein sequence, read N- to C-terminus: Monodehydroascorbate reductase 1, peroxisomal (479 aa).

Over 1–3 (MGR) the chain is Cytoplasmic. Residues 4 to 24 (AFEYVILGGGVAAGYAALEFV) form a helical membrane-spanning segment. Residues 12–15 (GGVA), Glu41, Arg48, Lys53, and 147–148 (RN) each bind FAD. At 25–445 (RRNGGASSQE…QATGGGGKPT (421 aa)) the chain is on the peroxisomal side. Residues 172–178 (GGYIGME), Arg202, and Gly260 contribute to the NAD(+) site. NADP(+)-binding positions include 174-178 (YIGME), Arg202, and Gly260. Asp297 is an FAD binding site. 314 to 315 (EH) serves as a coordination point for NAD(+). Position 314–315 (314–315 (EH)) interacts with NADP(+). Val316 contributes to the FAD binding site. Arg320 serves as a coordination point for L-ascorbate. Tyr347 contacts FAD. Residue Tyr347 coordinates NAD(+). Tyr347 contributes to the NADP(+) binding site. Arg349 lines the L-ascorbate pocket. Residues 446–466 (CAWHATVGVAAAVSIAAFACW) form a helical membrane-spanning segment. The Cytoplasmic segment spans residues 467–479 (YGWQAPYVLKRDF).

This sequence belongs to the FAD-dependent oxidoreductase family. FAD serves as cofactor.

The protein localises to the peroxisome membrane. It carries out the reaction 2 monodehydro-L-ascorbate radical + NADH + H(+) = 2 L-ascorbate + NAD(+). In terms of biological role, catalyzes the conversion of monodehydroascorbate to ascorbate, oxidizing NADH in the process. Ascorbate is a major antioxidant against reactive oxygen species (ROS) and nitric oxide (NO). This chain is Monodehydroascorbate reductase 1, peroxisomal, found in Oryza sativa subsp. japonica (Rice).